A 104-amino-acid polypeptide reads, in one-letter code: Iron-sulfur cluster assembly protein CyaY (104 aa).

This sequence belongs to the frataxin family.

Involved in iron-sulfur (Fe-S) cluster assembly. May act as a regulator of Fe-S biogenesis. This is Iron-sulfur cluster assembly protein CyaY from Tolumonas auensis (strain DSM 9187 / NBRC 110442 / TA 4).